Consider the following 418-residue polypeptide: Gamma-glutamyl phosphate reductase (418 aa).

It belongs to the gamma-glutamyl phosphate reductase family.

It localises to the cytoplasm. It carries out the reaction L-glutamate 5-semialdehyde + phosphate + NADP(+) = L-glutamyl 5-phosphate + NADPH + H(+). Its pathway is amino-acid biosynthesis; L-proline biosynthesis; L-glutamate 5-semialdehyde from L-glutamate: step 2/2. Its function is as follows. Catalyzes the NADPH-dependent reduction of L-glutamate 5-phosphate into L-glutamate 5-semialdehyde and phosphate. The product spontaneously undergoes cyclization to form 1-pyrroline-5-carboxylate. This chain is Gamma-glutamyl phosphate reductase, found in Geobacter sp. (strain M21).